Here is a 761-residue protein sequence, read N- to C-terminus: Mitochondrial inner membrane m-AAA protease component YTA10 (761 aa).

At 1-115 (MMMWQRYARG…SLSEYFRSKE (115 aa)) the chain is on the mitochondrial matrix side. The segment at 67-101 (SWTRLNENRPNKEGEGKNNGNKDNNSNKEDGKDKR) is disordered. Basic and acidic residues-rich tracts occupy residues 72–82 (NENRPNKEGEG) and 91–101 (NSNKEDGKDKR). A helical transmembrane segment spans residues 116–136 (FANTMFLTIGFTIIFTLLTPS). At 137-223 (SNNSGDDSNR…IPIKYIERSS (87 aa)) the chain is on the mitochondrial intermembrane side. A helical transmembrane segment spans residues 224 to 244 (PFTFLFPFLPTIILLGGLYFI). The Mitochondrial matrix segment spans residues 245-761 (TRKINSSPPN…EPPEAPAATN (517 aa)). Positions 290, 291, 332, 333, 334, 335, 336, and 472 each coordinate ATP. H558 is a Zn(2+) binding site. The active site involves E559. Zn(2+) is bound by residues H562 and D634.

In the N-terminal section; belongs to the AAA ATPase family. The protein in the C-terminal section; belongs to the peptidase M41 family. In terms of assembly, component of the 850 kDa m-AAA protease complex, a heterohexamer composed of YTA12/RCA1 and YTA10/AFG3. Associates with the prohibitin complex, composed of PHB1 and PHB2, inhibiting the activity of the m-AAA protease complex. Zn(2+) is required as a cofactor.

The protein localises to the mitochondrion inner membrane. The enzyme catalyses ATP + H2O = ADP + phosphate + H(+). ATP hydrolysis is coordinated within m-AAA protease ring complexes: ATP-binding to YTA10/AFG3 inhibits ATP hydrolysis by the neighboring subunit YTA12/RCA1, leading to coordinated ATP hydrolysis within the AAA ATPase ring. Catalytic component of the m-AAA protease, a protease that plays a key role in proteostasis of inner mitochondrial membrane proteins. YTA10/AFG3 possesses both ATPase and protease activities: the ATPase activity is required to unfold substrates, threading them into the internal proteolytic cavity for hydrolysis into small peptide fragments. The complex is necessary for the assembly of mitochondrial respiratory chain and ATPase complexes. The m-AAA protease carries out protein quality control in the inner membrane of the mitochondria by mediating degradation of mistranslated or misfolded polypeptides. It also mediates protein maturation of the mitochondrial ribosomal subunit MRPL32/bL32m by catalyzing the cleavage of the presequence of MRPL32/bL32m prior to assembly into the mitochondrial ribosome. Promotes maturation of cytochrome c peroxidase (CCP1) by acting as a membrane protein dislocase via its ATPase activity: pulls the CCP1 transmembrane to the matrix prior to processing by the rhomboid protease PCP1. The membrane protein dislocase activity is also required to dislocate moderately hydrophobic transmembrane segments from the membrane. This is Mitochondrial inner membrane m-AAA protease component YTA10 from Saccharomyces cerevisiae (strain ATCC 204508 / S288c) (Baker's yeast).